The sequence spans 224 residues: Ribonuclease 3 (224 aa).

The RNase III domain maps to 4-127 (IEKLEQSLTY…IIGAIHLEAG (124 aa)). E40 contributes to the Mg(2+) binding site. Residue D44 is part of the active site. The Mg(2+) site is built by D113 and E116. E116 is a catalytic residue. In terms of domain architecture, DRBM spans 154 to 223 (DYKTKLQEIT…AKIALEKLGA (70 aa)).

The protein belongs to the ribonuclease III family. In terms of assembly, homodimer. Mg(2+) serves as cofactor.

Its subcellular location is the cytoplasm. The enzyme catalyses Endonucleolytic cleavage to 5'-phosphomonoester.. Digests double-stranded RNA. Involved in the processing of primary rRNA transcript to yield the immediate precursors to the large and small rRNAs (23S and 16S). Processes some mRNAs, and tRNAs when they are encoded in the rRNA operon. Processes pre-crRNA and tracrRNA of type II CRISPR loci if present in the organism. The protein is Ribonuclease 3 of Campylobacter jejuni subsp. jejuni serotype O:6 (strain 81116 / NCTC 11828).